The following is a 369-amino-acid chain: Tetraacyldisaccharide 4'-kinase (369 aa).

Val-68–Thr-75 contacts ATP.

This sequence belongs to the LpxK family.

The catalysed reaction is a lipid A disaccharide + ATP = a lipid IVA + ADP + H(+). The protein operates within glycolipid biosynthesis; lipid IV(A) biosynthesis; lipid IV(A) from (3R)-3-hydroxytetradecanoyl-[acyl-carrier-protein] and UDP-N-acetyl-alpha-D-glucosamine: step 6/6. Functionally, transfers the gamma-phosphate of ATP to the 4'-position of a tetraacyldisaccharide 1-phosphate intermediate (termed DS-1-P) to form tetraacyldisaccharide 1,4'-bis-phosphate (lipid IVA). This is Tetraacyldisaccharide 4'-kinase from Chlamydia muridarum (strain MoPn / Nigg).